A 278-amino-acid chain; its full sequence is 4-deoxy-L-threo-5-hexosulose-uronate ketol-isomerase (278 aa).

Zn(2+) is bound by residues histidine 196, histidine 198, glutamate 203, and histidine 245.

This sequence belongs to the KduI family. In terms of assembly, homohexamer. Requires Zn(2+) as cofactor.

It catalyses the reaction 5-dehydro-4-deoxy-D-glucuronate = 3-deoxy-D-glycero-2,5-hexodiulosonate. It functions in the pathway glycan metabolism; pectin degradation; 2-dehydro-3-deoxy-D-gluconate from pectin: step 4/5. Catalyzes the isomerization of 5-dehydro-4-deoxy-D-glucuronate to 3-deoxy-D-glycero-2,5-hexodiulosonate. The polypeptide is 4-deoxy-L-threo-5-hexosulose-uronate ketol-isomerase (Escherichia coli (strain SMS-3-5 / SECEC)).